Reading from the N-terminus, the 424-residue chain is Zinc metalloprotease RasP (424 aa).

The next 5 membrane-spanning stretches (helical) occupy residues Val5–Phe25, Phe174–Ile194, Leu317–Tyr337, Phe351–Pro371, and Glu396–Trp416. His18 is a binding site for Zn(2+). Glu19 is a catalytic residue. His22 serves as a coordination point for Zn(2+). Positions Ala184–Glu269 constitute a PDZ domain.

This sequence belongs to the peptidase M50B family. Requires Zn(2+) as cofactor.

It localises to the cell membrane. Functionally, is responsible for Site-2 cleavage of the RsiW anti-sigma factor. This results, after a third proteolytic step catalyzed by the ClpXP protease, in the release of SigW and the transcription activation of the genes under the control of the sigma-W factor. This chain is Zinc metalloprotease RasP (rasP), found in Oceanobacillus iheyensis (strain DSM 14371 / CIP 107618 / JCM 11309 / KCTC 3954 / HTE831).